Consider the following 540-residue polypeptide: 2,3-bisphosphoglycerate-independent phosphoglycerate mutase (540 aa).

Residues Asp24 and Ser74 each coordinate Mn(2+). The active-site Phosphoserine intermediate is Ser74. Residues His135, 165 to 166 (RD), Arg197, Arg203, 268 to 271 (RPDR), and Lys341 each bind substrate. Positions 408, 412, 449, 450, and 467 each coordinate Mn(2+).

Belongs to the BPG-independent phosphoglycerate mutase family. In terms of assembly, monomer. Mn(2+) is required as a cofactor.

The catalysed reaction is (2R)-2-phosphoglycerate = (2R)-3-phosphoglycerate. The protein operates within carbohydrate degradation; glycolysis; pyruvate from D-glyceraldehyde 3-phosphate: step 3/5. Functionally, catalyzes the interconversion of 2-phosphoglycerate and 3-phosphoglycerate. The sequence is that of 2,3-bisphosphoglycerate-independent phosphoglycerate mutase from Prochlorococcus marinus (strain SARG / CCMP1375 / SS120).